Reading from the N-terminus, the 1226-residue chain is Arf guanine nucleotide exchange factor SYT1 (1226 aa).

Disordered regions lie at residues 17–39 (HSND…DKLR) and 113–158 (RNGQ…RNSK). Residues 131-142 (SIEKVPKPDGER) show a composition bias toward basic and acidic residues. Thr277 carries the post-translational modification Phosphothreonine. Disordered regions lie at residues 311-405 (NSLM…TGMS), 954-1022 (STGS…NEDY), and 1178-1198 (LEHG…DGID). The span at 349-360 (LSRSRSQSTSFV) shows a compositional bias: polar residues. Residue Ser369 is modified to Phosphoserine. The span at 386–405 (GPTSVYNNKSNANSTITGMS) shows a compositional bias: polar residues. The SEC7 domain occupies 405–620 (SRRSSSIVNA…TYFYENVTAK (216 aa)). A PH domain is found at 844-1074 (ILQMGAIMNL…DSINLFSAYD (231 aa)). Low complexity-rich tracts occupy residues 956–969 (GSHT…SSSA) and 994–1017 (SSVS…SSND).

Its subcellular location is the cytoplasm. Inhibited by brefeldin A. Guanine nucleotide exchange factor for Arf GTPases, stimulating the nucleotide exchange from the GDP-bound to the GTP-bound form. Catalyzes both the GDP release by and the GTP binding to ARF2. Has no exchange activity on Rab GTPases. Involved in vesicular transport. The sequence is that of Arf guanine nucleotide exchange factor SYT1 (SYT1) from Saccharomyces cerevisiae (strain ATCC 204508 / S288c) (Baker's yeast).